The primary structure comprises 450 residues: Bifunctional protein GlmU (450 aa).

The interval 1–226 (MLAVAVLAAG…PDEVNGINNR (226 aa)) is pyrophosphorylase. UDP-N-acetyl-alpha-D-glucosamine is bound by residues 7-10 (LAAG), lysine 21, glutamine 73, and 78-79 (GT). A Mg(2+)-binding site is contributed by aspartate 103. The UDP-N-acetyl-alpha-D-glucosamine site is built by glycine 140, glutamate 155, asparagine 170, and asparagine 224. Residue asparagine 224 coordinates Mg(2+). The tract at residues 227 to 247 (KQLAQCEGVLQQRLRDYWMDE) is linker. The segment at 248–450 (GVTFVDPASC…TKDNWANRSI (203 aa)) is N-acetyltransferase. 2 residues coordinate UDP-N-acetyl-alpha-D-glucosamine: arginine 329 and lysine 347. Histidine 359 (proton acceptor) is an active-site residue. Residues tyrosine 362 and asparagine 373 each contribute to the UDP-N-acetyl-alpha-D-glucosamine site. Residues alanine 376, 382–383 (NY), alanine 419, and arginine 436 contribute to the acetyl-CoA site.

In the N-terminal section; belongs to the N-acetylglucosamine-1-phosphate uridyltransferase family. This sequence in the C-terminal section; belongs to the transferase hexapeptide repeat family. Homotrimer. Mg(2+) is required as a cofactor.

Its subcellular location is the cytoplasm. It catalyses the reaction alpha-D-glucosamine 1-phosphate + acetyl-CoA = N-acetyl-alpha-D-glucosamine 1-phosphate + CoA + H(+). The catalysed reaction is N-acetyl-alpha-D-glucosamine 1-phosphate + UTP + H(+) = UDP-N-acetyl-alpha-D-glucosamine + diphosphate. Its pathway is nucleotide-sugar biosynthesis; UDP-N-acetyl-alpha-D-glucosamine biosynthesis; N-acetyl-alpha-D-glucosamine 1-phosphate from alpha-D-glucosamine 6-phosphate (route II): step 2/2. It participates in nucleotide-sugar biosynthesis; UDP-N-acetyl-alpha-D-glucosamine biosynthesis; UDP-N-acetyl-alpha-D-glucosamine from N-acetyl-alpha-D-glucosamine 1-phosphate: step 1/1. It functions in the pathway bacterial outer membrane biogenesis; LPS lipid A biosynthesis. Catalyzes the last two sequential reactions in the de novo biosynthetic pathway for UDP-N-acetylglucosamine (UDP-GlcNAc). The C-terminal domain catalyzes the transfer of acetyl group from acetyl coenzyme A to glucosamine-1-phosphate (GlcN-1-P) to produce N-acetylglucosamine-1-phosphate (GlcNAc-1-P), which is converted into UDP-GlcNAc by the transfer of uridine 5-monophosphate (from uridine 5-triphosphate), a reaction catalyzed by the N-terminal domain. This chain is Bifunctional protein GlmU, found in Synechococcus sp. (strain CC9902).